We begin with the raw amino-acid sequence, 550 residues long: Mitochondrial distribution and morphology protein 12 (550 aa).

The 550-residue stretch at 1–550 folds into the SMP-LTD domain; sequence MSIELNWETL…VYPSFWTFLV (550 aa). 3 disordered regions span residues 62 to 168, 218 to 356, and 474 to 493; these read ITDP…PQDL, PPQW…TKYR, and TLAS…GGNT. The segment covering 69–90 has biased composition (acidic residues); sequence FYEEDPDVDYDDEDEDVEETHD. Low complexity predominate over residues 125 to 140; the sequence is VASSSSSSVGRGSAPR. Composition is skewed to polar residues over residues 148 to 157, 251 to 269, 278 to 289, and 296 to 323; these read PTKSNININT, PSHS…QTAS, TPTSFLRSGQQT, and VSTL…TAQE.

This sequence belongs to the MDM12 family. Component of the ER-mitochondria encounter structure (ERMES) or MDM complex, composed of MMM1, MDM10, MDM12 and MDM34. An MMM1 homodimer associates with one molecule of MDM12 on each side in a pairwise head-to-tail manner, and the SMP-LTD domains of MMM1 and MDM12 generate a continuous hydrophobic tunnel for phospholipid trafficking.

The protein resides in the mitochondrion outer membrane. It localises to the endoplasmic reticulum membrane. Component of the ERMES/MDM complex, which serves as a molecular tether to connect the endoplasmic reticulum (ER) and mitochondria. Components of this complex are involved in the control of mitochondrial shape and protein biogenesis, and function in nonvesicular lipid trafficking between the ER and mitochondria. MDM12 is required for the interaction of the ER-resident membrane protein MMM1 and the outer mitochondrial membrane-resident beta-barrel protein MDM10. The MDM12-MMM1 subcomplex functions in the major beta-barrel assembly pathway that is responsible for biogenesis of all mitochondrial outer membrane beta-barrel proteins, and acts in a late step after the SAM complex. The MDM10-MDM12-MMM1 subcomplex further acts in the TOM40-specific pathway after the action of the MDM12-MMM1 complex. Essential for establishing and maintaining the structure of mitochondria and maintenance of mtDNA nucleoids. The protein is Mitochondrial distribution and morphology protein 12 of Pyricularia oryzae (strain 70-15 / ATCC MYA-4617 / FGSC 8958) (Rice blast fungus).